A 285-amino-acid chain; its full sequence is Pantothenate synthetase (285 aa).

Residue 30-37 participates in ATP binding; sequence MGYLHEGH. Histidine 37 acts as the Proton donor in catalysis. Glutamine 61 is a (R)-pantoate binding site. Glutamine 61 is a binding site for beta-alanine. Position 148-151 (148-151) interacts with ATP; sequence GKKD. Glutamine 154 serves as a coordination point for (R)-pantoate. ATP is bound by residues isoleucine 177 and 185 to 188; that span reads LSSR.

This sequence belongs to the pantothenate synthetase family. As to quaternary structure, homodimer.

The protein resides in the cytoplasm. The catalysed reaction is (R)-pantoate + beta-alanine + ATP = (R)-pantothenate + AMP + diphosphate + H(+). It participates in cofactor biosynthesis; (R)-pantothenate biosynthesis; (R)-pantothenate from (R)-pantoate and beta-alanine: step 1/1. Its function is as follows. Catalyzes the condensation of pantoate with beta-alanine in an ATP-dependent reaction via a pantoyl-adenylate intermediate. In Leptospira borgpetersenii serovar Hardjo-bovis (strain JB197), this protein is Pantothenate synthetase.